A 150-amino-acid chain; its full sequence is uncharacterized protein (150 aa).

Positions 3 to 145 constitute a Flavodoxin-like domain; the sequence is VAILSGSVYG…DAEPWLAEFA (143 aa).

It belongs to the flavodoxin family. MioC subfamily. Requires FMN as cofactor.

In terms of biological role, probable electron transporter. This is an uncharacterized protein from Pseudomonas aeruginosa (strain ATCC 15692 / DSM 22644 / CIP 104116 / JCM 14847 / LMG 12228 / 1C / PRS 101 / PAO1).